A 574-amino-acid chain; its full sequence is Phosphoenolpyruvate-protein phosphotransferase (574 aa).

Catalysis depends on histidine 190, which acts as the Tele-phosphohistidine intermediate. The phosphoenolpyruvate site is built by arginine 297 and arginine 333. Positions 432 and 456 each coordinate Mg(2+). Phosphoenolpyruvate-binding positions include 455 to 456 and arginine 466; that span reads ND. The active-site Proton donor is cysteine 503.

The protein belongs to the PEP-utilizing enzyme family. In terms of assembly, homodimer. The cofactor is Mg(2+).

Its subcellular location is the cytoplasm. It carries out the reaction L-histidyl-[protein] + phosphoenolpyruvate = N(pros)-phospho-L-histidyl-[protein] + pyruvate. General (non sugar-specific) component of the phosphoenolpyruvate-dependent sugar phosphotransferase system (sugar PTS). This major carbohydrate active-transport system catalyzes the phosphorylation of incoming sugar substrates concomitantly with their translocation across the cell membrane. Enzyme I transfers the phosphoryl group from phosphoenolpyruvate (PEP) to the phosphoryl carrier protein (HPr). This chain is Phosphoenolpyruvate-protein phosphotransferase (ptsI), found in Latilactobacillus sakei (Lactobacillus sakei).